The primary structure comprises 132 residues: Small ribosomal subunit protein uS8 (132 aa).

This sequence belongs to the universal ribosomal protein uS8 family. In terms of assembly, part of the 30S ribosomal subunit. Contacts proteins S5 and S12.

In terms of biological role, one of the primary rRNA binding proteins, it binds directly to 16S rRNA central domain where it helps coordinate assembly of the platform of the 30S subunit. In Shouchella clausii (strain KSM-K16) (Alkalihalobacillus clausii), this protein is Small ribosomal subunit protein uS8.